The primary structure comprises 172 residues: 3-hydroxydecanoyl-[acyl-carrier-protein] dehydratase (172 aa).

Histidine 71 is an active-site residue.

The protein belongs to the thioester dehydratase family. FabA subfamily. In terms of assembly, homodimer.

The protein localises to the cytoplasm. The catalysed reaction is a (3R)-hydroxyacyl-[ACP] = a (2E)-enoyl-[ACP] + H2O. It catalyses the reaction (3R)-hydroxydecanoyl-[ACP] = (2E)-decenoyl-[ACP] + H2O. It carries out the reaction (2E)-decenoyl-[ACP] = (3Z)-decenoyl-[ACP]. It functions in the pathway lipid metabolism; fatty acid biosynthesis. Its function is as follows. Necessary for the introduction of cis unsaturation into fatty acids. Catalyzes the dehydration of (3R)-3-hydroxydecanoyl-ACP to E-(2)-decenoyl-ACP and then its isomerization to Z-(3)-decenoyl-ACP. Can catalyze the dehydratase reaction for beta-hydroxyacyl-ACPs with saturated chain lengths up to 16:0, being most active on intermediate chain length. The protein is 3-hydroxydecanoyl-[acyl-carrier-protein] dehydratase of Escherichia coli O6:K15:H31 (strain 536 / UPEC).